A 95-amino-acid chain; its full sequence is Fungal defensin plectasin (95 aa).

An N-terminal signal peptide occupies residues 1-23 (MQFTTILSIGITVFGLLNTGAFA). A propeptide spanning residues 24-55 (APQPVPEAYAVSDPEAHPDDFAGMDANQLQKR) is cleaved from the precursor. The beta-D-GlcNAc-(1-&gt;4)-Mur2Ac(oyl-L-Ala-gamma-D-Glu-L-Lys-D-Ala-D-Ala)-di-trans,octa-cis-undecaprenyl diphosphate site is built by Phe57, Gly58, and Cys59. 3 cysteine pairs are disulfide-bonded: Cys59–Cys85, Cys70–Cys92, and Cys74–Cys94. A binds to membrane interface region spans residues 61 to 64 (GPWD). Beta-D-GlcNAc-(1-&gt;4)-Mur2Ac(oyl-L-Ala-gamma-D-Glu-L-Lys-D-Ala-D-Ala)-di-trans,octa-cis-undecaprenyl diphosphate contacts are provided by Asp67, His73, Tyr84, Ala86, Gly88, Cys92, and Lys93. Positions 86-92 (AKGGFVC) are binds to membrane interface.

This sequence belongs to the invertebrate defensin family. Type 2 subfamily.

The protein localises to the secreted. The protein resides in the host cell membrane. Antimicrobial peptide that potently acts against several species of Gram-positive bacteria. It selectively inhibits peptidoglycan biosynthesis through complex formation with the cell wall precursor lipid II (1:1 molar ratio) thus inhibiting cell wall synthesis. It does not disrupt cell membranes. Is especially active against numerous clinical isolates of S.pneumoniae, including all 90 different serotypes and isolates resistant to clinically used antibiotics. In vitro, shows considerable selectivity for bacteria over mammalian cells. The peptide synthesized in D-amino acids does not show antibacterial activity. In vitro, acts on voltage-gated potassium channels by moderately inhibiting mammalian Kv1.3/KCNA3 (IC(50)=2.8 uM), and moderately inhibiting others potassium channels. The protein is Fungal defensin plectasin (DEF) of Pseudoplectania nigrella (Ebony cup).